A 204-amino-acid chain; its full sequence is ATP phosphoribosyltransferase (204 aa).

It belongs to the ATP phosphoribosyltransferase family. Short subfamily. As to quaternary structure, heteromultimer composed of HisG and HisZ subunits.

The protein resides in the cytoplasm. The catalysed reaction is 1-(5-phospho-beta-D-ribosyl)-ATP + diphosphate = 5-phospho-alpha-D-ribose 1-diphosphate + ATP. The protein operates within amino-acid biosynthesis; L-histidine biosynthesis; L-histidine from 5-phospho-alpha-D-ribose 1-diphosphate: step 1/9. Catalyzes the condensation of ATP and 5-phosphoribose 1-diphosphate to form N'-(5'-phosphoribosyl)-ATP (PR-ATP). Has a crucial role in the pathway because the rate of histidine biosynthesis seems to be controlled primarily by regulation of HisG enzymatic activity. In Staphylococcus aureus (strain Mu3 / ATCC 700698), this protein is ATP phosphoribosyltransferase.